Reading from the N-terminus, the 95-residue chain is Pyrimidine/purine nucleoside phosphorylase (95 aa).

The protein belongs to the nucleoside phosphorylase PpnP family.

The catalysed reaction is a purine D-ribonucleoside + phosphate = a purine nucleobase + alpha-D-ribose 1-phosphate. It catalyses the reaction adenosine + phosphate = alpha-D-ribose 1-phosphate + adenine. It carries out the reaction cytidine + phosphate = cytosine + alpha-D-ribose 1-phosphate. The enzyme catalyses guanosine + phosphate = alpha-D-ribose 1-phosphate + guanine. The catalysed reaction is inosine + phosphate = alpha-D-ribose 1-phosphate + hypoxanthine. It catalyses the reaction thymidine + phosphate = 2-deoxy-alpha-D-ribose 1-phosphate + thymine. It carries out the reaction uridine + phosphate = alpha-D-ribose 1-phosphate + uracil. The enzyme catalyses xanthosine + phosphate = alpha-D-ribose 1-phosphate + xanthine. Catalyzes the phosphorolysis of diverse nucleosides, yielding D-ribose 1-phosphate and the respective free bases. Can use uridine, adenosine, guanosine, cytidine, thymidine, inosine and xanthosine as substrates. Also catalyzes the reverse reactions. This chain is Pyrimidine/purine nucleoside phosphorylase, found in Yersinia pestis bv. Antiqua (strain Antiqua).